The sequence spans 751 residues: Adhesive plaque matrix protein (751 aa).

Positions 1–20 (MEGIKLNLCLLCIFTCDILG) are cleaved as a signal peptide. The tract at residues 21–41 (FSNGNIYNAHGSAYAGASAGA) is nonrepetitive linker. Repeat copies occupy residues 109–118 (YKPKMTYPPT), 119–128 (YKPKPSYPPT), 129–138 (YKPKPSYPAT), 139–148 (YKSKSSYPSS), 149–158 (YKPKKTYPPT), 159–168 (YKPKLTYPPT), 169–178 (YKPKPSYPPT), 179–188 (YKPKPSYPAT), 189–198 (YKSKSSYPPS), 199–208 (YKTKKTYPSS), 209–218 (YKPKKTYPST), 219–228 (YKPKVSYPPT), 229–238 (YKSKKSYPPI), 239–248 (YKTKASYPSS), 249–258 (YKPKKTYPST), 259–268 (YKPKISYPPT), 269–278 (YKAKPSYPTS), 279–288 (YRAKPSYPST), 289–298 (YKAKPSYPPT), 299–308 (YKAKPSYPPT), 309–318 (YKAKPTYPST), 319–328 (YKAKPSYPPT), 329–338 (YKAKPSYPPT), 339–348 (YKAKPSYPPS), 349–358 (YKPKTTYPPS), 359–368 (YKPKISYPPT), 369–378 (YKAKPSYPPI), 379–388 (YKAKPSYPPT), 389–398 (YKAKPSYLPT), 399–408 (YKAKPSYPPT), 409–418 (YKAKPRYPTT), 419–428 (YKAKPSYPPT), 429–438 (YKAKPSYPPT), 439–448 (YKAKLSYPPT), 449–458 (YKAKPSYPPT), 459–468 (YKAKPSYPPT), 469–478 (YKAKPSYPPT), 479–488 (YKTKPSYPRT), 489–498 (YKAKPSYSST), 499–508 (YKAKPSYPPT), 509–518 (YKAKPSYPPT), 519–528 (YKAKPSYPPT), 529–538 (YKAKPSYPPT), 539–548 (YKAKPSYPPT), 549–558 (YKAKPSYPQT), 559–568 (YKAKSSYPPT), 569–578 (YKAKPSYPPT), 579–588 (YKAKPSYPPT), 589–598 (YKAKPSYPPT), 599–608 (YKAKPSYPPT), 609–618 (YKAKPSYPPT), 619–628 (YKAKPSYPPT), 629–638 (YKAKPSYPPT), 639–648 (YKAKPSYPPT), and 649–658 (YKAKPSYPAT). Residues 109-732 (YKPKMTYPPT…YKPKPSYPPT (624 aa)) are 63 X 10 AA tandem repeats of Y-[KR]-[APTS]-K-[KPMSLTIVA]-[STR]-Y-[PLS]-[PASRQT]-[STI]. Residues 158-167 (TYKPKLTYPP) show a composition bias toward low complexity. Residues 158 to 359 (TYKPKLTYPP…KPKTTYPPSY (202 aa)) are disordered. Over residues 168 to 184 (TYKPKPSYPPTYKPKPS) the composition is skewed to pro residues. A compositionally biased stretch (low complexity) spans 185–262 (YPATYKSKSS…KTYPSTYKPK (78 aa)). Composition is skewed to low complexity over residues 288–343 (TYKA…KAKP) and 350–359 (KPKTTYPPSY). Residues 397–636 (PTYKAKPSYP…PTYKAKPSYP (240 aa)) are disordered. Low complexity predominate over residues 444–486 (SYPPTYKAKPSYPPTYKAKPSYPPTYKAKPSYPPTYKTKPSYP). A 56; truncated repeat occupies 659–662 (YPST). A disordered region spans residues 660 to 751 (PSTYKAKPSY…KKKISYPSQY (92 aa)). Residues 662–677 (TYKAKPSYPPTYKAKP) show a composition bias toward low complexity. 7 consecutive repeat copies span residues 663 to 672 (YKAKPSYPPT), 673 to 682 (YKAKPSYPPT), 683 to 692 (YKPKPSYPPT), 693 to 702 (YKSKSSYPSS), 703 to 712 (YKPKKTYPPT), 713 to 722 (YKPKLTYPPI), and 723 to 732 (YKPKPSYPPT). Over residues 678-690 (SYPPTYKPKPSYP) the composition is skewed to pro residues. Residues 691–721 (PTYKSKSSYPSSYKPKKTYPPTYKPKLTYPP) are compositionally biased toward low complexity.

Hydroxylated on proline (mono- or dihydroxylation) and tyrosine residues (to L-DOPA = 3',4'-dihydroxyphenylalanine) of the tandem repeats. Produced by the byssal gland.

The protein resides in the secreted. Its function is as follows. Provides adhesiveness to the mussel's foot. Mussels produce one of the strongest water insoluble glues. The mussel's adhesive is a bundle of threads, called a byssus, formed by a fibrous collagenous core coated with adhesive proteins. The sequence is that of Adhesive plaque matrix protein (FP1) from Mytilus galloprovincialis (Mediterranean mussel).